We begin with the raw amino-acid sequence, 1420 residues long: Transcription elongation factor spt6 (1420 aa).

3 disordered regions span residues 1–104 (MSAR…EEDL), 117–167 (AAAT…RPMH), and 1186–1208 (VSRPTPRPRDHMRGEWDDRQEAK). Composition is skewed to acidic residues over residues 11–29 (AVLDDEENENEEEQEEDYD), 45–57 (SSEEEEEDDDDEE), and 67–76 (IVDEDEEIEE). The segment covering 125–134 (KRLKRGHKDH) has biased composition (basic residues). Acidic residues predominate over residues 145–154 (FNSDEDEEAA). Residues 1230–1330 (PLFRPFNSTQ…VDEMMLHEKY (101 aa)) enclose the SH2 domain.

Belongs to the SPT6 family.

The protein resides in the nucleus. Its subcellular location is the chromosome. Histone H3-H4 chaperone that plays a role in maintenance of chromatin structure during RNA polymerase II transcription elongation thereby repressing transcription initiation from cryptic promoters. Mediates the reassembly of nucleosomes onto the promoters of at least a selected set of genes during repression; the nucleosome reassembly is essential for transcriptional repression. Essential for viability. This is Transcription elongation factor spt6 (spt6) from Aspergillus fumigatus (strain ATCC MYA-4609 / CBS 101355 / FGSC A1100 / Af293) (Neosartorya fumigata).